A 604-amino-acid chain; its full sequence is Dopamine receptor 3 (604 aa).

Residues 1–23 (MLTGQHHIPGIESPLMVVLWRVA) lie on the Extracellular side of the membrane. Residues 24–44 (AGVFLPLVPTMAVFGNVLVIL) traverse the membrane as a helical segment. Topologically, residues 45–58 (SVYRERNLQTVTNM) are cytoplasmic. The helical transmembrane segment at 59-79 (LIVSLAVSDLFVAIGVMSFGV) threads the bilayer. At 80 to 96 (YYEWNGFKWGLGSFFCH) the chain is on the extracellular side. Cysteine 95 and cysteine 170 are disulfide-bonded. A helical membrane pass occupies residues 97 to 117 (VYQALDVACSTASILNLLAIS). Over 118–141 (LDRYIAIGHPISYAQYGARGGRAM) the chain is Cytoplasmic. The helical transmembrane segment at 142–162 (ISITIVWGVSCAVALPLLLGV) threads the bilayer. At 163-179 (NPMENDQCELANPWFNM) the chain is on the extracellular side. Residues 180 to 200 (ISSIFSFFIPCIAMIILYTII) form a helical membrane-spanning segment. At 201-520 (FRRLRQRERA…TKQMRREHKA (320 aa)) the chain is on the cytoplasmic side. The segment at 399–430 (SIQDEKKMNSRPPENPFAHQNGTNKQRLLPNP) is disordered. A helical transmembrane segment spans residues 521–541 (TVTLAVVLAVFLFCWLPFFIL). Topologically, residues 542 to 559 (HLSNSICLVIDSNSDCIG) are extracellular. A helical transmembrane segment spans residues 560–580 (FLPLYLATWLGYLNSSLNPLI). The Cytoplasmic segment spans residues 581-604 (YTVFDQRFRNAFRNILSCGFFKKR).

It belongs to the G-protein coupled receptor 1 family.

It localises to the cell membrane. In terms of biological role, receptor for dopamine. The activity of this receptor is mediated by G proteins which activate adenylyl cyclase. In terms of antagonist responses, would be classed with the D2-like dopamine receptor group. Mediates the effect of dopamine on the inhibition of locomotion. Acts as an antagonist of dop-1. This Caenorhabditis briggsae protein is Dopamine receptor 3.